A 291-amino-acid chain; its full sequence is ATP phosphoribosyltransferase (291 aa).

Belongs to the ATP phosphoribosyltransferase family. Long subfamily. Mg(2+) is required as a cofactor.

The protein localises to the cytoplasm. It carries out the reaction 1-(5-phospho-beta-D-ribosyl)-ATP + diphosphate = 5-phospho-alpha-D-ribose 1-diphosphate + ATP. It functions in the pathway amino-acid biosynthesis; L-histidine biosynthesis; L-histidine from 5-phospho-alpha-D-ribose 1-diphosphate: step 1/9. Feedback inhibited by histidine. In terms of biological role, catalyzes the condensation of ATP and 5-phosphoribose 1-diphosphate to form N'-(5'-phosphoribosyl)-ATP (PR-ATP). Has a crucial role in the pathway because the rate of histidine biosynthesis seems to be controlled primarily by regulation of HisG enzymatic activity. The protein is ATP phosphoribosyltransferase of Desulfosudis oleivorans (strain DSM 6200 / JCM 39069 / Hxd3) (Desulfococcus oleovorans).